Reading from the N-terminus, the 254-residue chain is Ribonuclease HII (254 aa).

One can recognise an RNase H type-2 domain in the interval 70-254; the sequence is TCIAGIDEAG…SFAPVKSVIS (185 aa). Residues aspartate 76, glutamate 77, and aspartate 168 each contribute to the a divalent metal cation site.

This sequence belongs to the RNase HII family. Mn(2+) is required as a cofactor. Mg(2+) serves as cofactor.

The protein localises to the cytoplasm. The enzyme catalyses Endonucleolytic cleavage to 5'-phosphomonoester.. Its function is as follows. Endonuclease that specifically degrades the RNA of RNA-DNA hybrids. The chain is Ribonuclease HII from Bacillus pumilus (strain SAFR-032).